Reading from the N-terminus, the 411-residue chain is Arginine deiminase (411 aa).

The active-site Amidino-cysteine intermediate is the Cys401.

The protein belongs to the arginine deiminase family.

It is found in the cytoplasm. It carries out the reaction L-arginine + H2O = L-citrulline + NH4(+). The protein operates within amino-acid degradation; L-arginine degradation via ADI pathway; carbamoyl phosphate from L-arginine: step 1/2. In Staphylococcus haemolyticus (strain JCSC1435), this protein is Arginine deiminase.